Here is a 130-residue protein sequence, read N- to C-terminus: Fluoride-specific ion channel FluC (130 aa).

The next 4 membrane-spanning stretches (helical) occupy residues 3 to 23, 39 to 59, 67 to 87, and 102 to 122; these read FIFL…YFVG, GTFS…HLAV, FGIF…SYGL, and VSYA…GWFL. Gly-77 and Thr-80 together coordinate Na(+).

This sequence belongs to the fluoride channel Fluc/FEX (TC 1.A.43) family.

It localises to the cell inner membrane. It catalyses the reaction fluoride(in) = fluoride(out). Its activity is regulated as follows. Na(+) is not transported, but it plays an essential structural role and its presence is essential for fluoride channel function. In terms of biological role, fluoride-specific ion channel. Important for reducing fluoride concentration in the cell, thus reducing its toxicity. The protein is Fluoride-specific ion channel FluC of Helicobacter pylori (strain Shi470).